Reading from the N-terminus, the 350-residue chain is Small ribosomal subunit biogenesis GTPase RsgA (350 aa).

Positions 1 to 17 are enriched in polar residues; the sequence is MSKNKLSKGQQRRVQAN. Positions 1–35 are disordered; sequence MSKNKLSKGQQRRVQANHQRRLRTDRKPELDDSQL. Positions 103–273 constitute a CP-type G domain; that stretch reads TSVLTRPDLY…VIDSPGVREF (171 aa). GTP contacts are provided by residues 159–162 and 213–221; these read NKID and GQSGVGKSS. 4 residues coordinate Zn(2+): cysteine 297, cysteine 302, histidine 304, and cysteine 310.

Belongs to the TRAFAC class YlqF/YawG GTPase family. RsgA subfamily. In terms of assembly, monomer. Associates with 30S ribosomal subunit, binds 16S rRNA. Zn(2+) is required as a cofactor.

The protein localises to the cytoplasm. In terms of biological role, one of several proteins that assist in the late maturation steps of the functional core of the 30S ribosomal subunit. Helps release RbfA from mature subunits. May play a role in the assembly of ribosomal proteins into the subunit. Circularly permuted GTPase that catalyzes slow GTP hydrolysis, GTPase activity is stimulated by the 30S ribosomal subunit. This is Small ribosomal subunit biogenesis GTPase RsgA from Yersinia pseudotuberculosis serotype O:1b (strain IP 31758).